The following is a 267-amino-acid chain: Potassium channel regulatory protein (267 aa).

Residues 5–74 form the BTB domain; the sequence is ELVTLNVGGK…LRTQQLLLPT (70 aa).

In terms of assembly, can form homooligomers. Interacts with KCNA1 (via cytoplasmic N-terminal domain) and KCNA4.

The protein localises to the endoplasmic reticulum. In terms of biological role, inhibits potassium fluxes in cells. May regulate Kv1 family channel proteins by retaining a fraction of channels in endomembranes. This chain is Potassium channel regulatory protein (KCNRG), found in Bos taurus (Bovine).